The sequence spans 193 residues: Dihydrofolate reductase (193 aa).

Residues 1–193 (MIKLVFRYSP…VTTLTESVYK (193 aa)) form the DHFR domain. NADP(+)-binding positions include arginine 7, 22 to 27 (FGLGDG), 52 to 55 (GAKT), and 73 to 77 (DLARD).

Belongs to the dihydrofolate reductase family.

The catalysed reaction is (6S)-5,6,7,8-tetrahydrofolate + NADP(+) = 7,8-dihydrofolate + NADPH + H(+). The protein operates within cofactor biosynthesis; tetrahydrofolate biosynthesis; 5,6,7,8-tetrahydrofolate from 7,8-dihydrofolate: step 1/1. In terms of biological role, key enzyme in folate metabolism. Catalyzes an essential reaction for de novo glycine and purine synthesis, and for DNA precursor synthesis. The polypeptide is Dihydrofolate reductase (frd) (Escherichia coli (Bacteriophage T4)).